The primary structure comprises 73 residues: Disintegrin trigramin-gamma (73 aa).

In terms of domain architecture, Disintegrin spans 1–73 (EAGEDCDCGS…AGCPRNPLHA (73 aa)). Intrachain disulfides connect Cys-6-Cys-21, Cys-8-Cys-16, Cys-15-Cys-38, Cys-29-Cys-35, Cys-34-Cys-59, and Cys-47-Cys-66. The short motif at 51-53 (RGD) is the Cell attachment site element.

The protein belongs to the venom metalloproteinase (M12B) family. P-II subfamily. P-IIa sub-subfamily. Monomer (disintegrin). In terms of tissue distribution, expressed by the venom gland.

Its subcellular location is the secreted. In terms of biological role, inhibits fibrinogen interaction with platelets. Acts by binding to alpha-IIb/beta-3 (ITGA2B/ITGB3) on the platelet surface and inhibits aggregation induced by ADP, thrombin, platelet-activating factor and collagen. The sequence is that of Disintegrin trigramin-gamma from Craspedocephalus gramineus (Bamboo pit viper).